Here is an 88-residue protein sequence, read N- to C-terminus: Protein alpha-1 (88 aa).

The chain crosses the membrane as a helical span at residues 38 to 58 (GFWIILIILLGILAIRIAIKV).

The protein localises to the membrane. In Bos taurus (Bovine), this protein is Protein alpha-1 (alpha).